Here is a 72-residue protein sequence, read N- to C-terminus: Sperm protein associated with the nucleus on the X chromosome N1 (72 aa).

The segment at 1-44 (MEQPTSSINGEKRKSPCESNNENDEMQETPNRDLAPEPSLKKMK) is disordered.

The protein belongs to the SPAN-X family.

This chain is Sperm protein associated with the nucleus on the X chromosome N1 (SPANXN1), found in Homo sapiens (Human).